A 316-amino-acid polypeptide reads, in one-letter code: Ribosomal RNA small subunit methyltransferase H (316 aa).

S-adenosyl-L-methionine is bound by residues 35–37, Asp55, Phe84, Asp105, and Gln112; that span reads AGH.

It belongs to the methyltransferase superfamily. RsmH family.

It localises to the cytoplasm. The enzyme catalyses cytidine(1402) in 16S rRNA + S-adenosyl-L-methionine = N(4)-methylcytidine(1402) in 16S rRNA + S-adenosyl-L-homocysteine + H(+). Its function is as follows. Specifically methylates the N4 position of cytidine in position 1402 (C1402) of 16S rRNA. This chain is Ribosomal RNA small subunit methyltransferase H, found in Streptococcus thermophilus (strain ATCC BAA-250 / LMG 18311).